Here is a 485-residue protein sequence, read N- to C-terminus: Metalloprotease AprA (485 aa).

Histidine 187 contacts Zn(2+). Glutamate 188 is an active-site residue. Zn(2+) contacts are provided by histidine 191 and histidine 197. Ca(2+)-binding residues include arginine 268, glycine 270, threonine 272, aspartate 300, glycine 302, glycine 303, aspartate 305, threonine 342, glutamate 344, glycine 349, glycine 351, aspartate 353, asparagine 358, leucine 360, asparagine 362, glycine 366, glycine 367, alanine 368, glycine 369, aspartate 371, glycine 375, glycine 376, glycine 377, glycine 378, aspartate 380, glycine 384, glycine 385, threonine 386, glycine 387, aspartate 389, aspartate 398, aspartate 405, aspartate 415, aspartate 461, threonine 463, asparagine 465, serine 467, and aspartate 469. 3 Hemolysin-type calcium-binding repeats span residues 347–364 (FGGS…ANVL), 365–382 (KGGA…ADQL), and 383–395 (WGGT…VFGA).

This sequence belongs to the peptidase M10B family. It depends on Ca(2+) as a cofactor. Requires Zn(2+) as cofactor.

It is found in the secreted. Functionally, secreted protease which is important for P.entomophila to counteract the local immune response of Drosophila. Can degrade antimicrobial peptides (AMPs), e.g. Diptericin and Cecropin A. Thus, protects P.entomophila from the Drosophila antimicrobial peptides produced by the gut innate immune response, and promotes bacterial persistence in the Drosophila gut and killing of the host. Is responsible for maturation of pro-Monalysin to the active toxin Monalysin, by cleaving its N-terminus. The sequence is that of Metalloprotease AprA from Pseudomonas entomophila (strain L48).